We begin with the raw amino-acid sequence, 448 residues long: UDP-glucose 6-dehydrogenase (448 aa).

Residues 2-19 (NITF…GIIM), Val11, Asp30, Lys35, Thr121, and Glu152 each bind NAD(+). Residues 148–152 (EFLRE), Lys204, Asn208, 249–253 (FLNAG), and Gly257 contribute to the substrate site. The active-site Nucleophile is the Cys260. An NAD(+)-binding site is contributed by Lys263. Lys321 is a substrate binding site. Arg328 lines the NAD(+) pocket.

This sequence belongs to the UDP-glucose/GDP-mannose dehydrogenase family.

The enzyme catalyses UDP-alpha-D-glucose + 2 NAD(+) + H2O = UDP-alpha-D-glucuronate + 2 NADH + 3 H(+). The protein operates within nucleotide-sugar biosynthesis; UDP-alpha-D-glucuronate biosynthesis; UDP-alpha-D-glucuronate from UDP-alpha-D-glucose: step 1/1. This is UDP-glucose 6-dehydrogenase (udg) from Rickettsia felis (strain ATCC VR-1525 / URRWXCal2) (Rickettsia azadi).